A 604-amino-acid chain; its full sequence is Ras guanine nucleotide exchange factor H (604 aa).

A compositionally biased stretch (polar residues) spans 1-26 (MSNTNINVQSSTPKKSLGSSQYSLAG). The interval 1–61 (MSNTNINVQS…QENSIDDSGS (61 aa)) is disordered. The span at 27–49 (SSSSNLNNINNNNNNNNNNNNNS) shows a compositional bias: low complexity. The span at 50 to 61 (TGQENSIDDSGS) shows a compositional bias: polar residues. Residues 115 to 147 (NDTMLLKLIMQYFHEENLTTSLKKIQEETKVQF) enclose the LisH domain. One can recognise an N-terminal Ras-GEF domain in the interval 221 to 335 (PDGTIKAATF…AVINLKIENY (115 aa)). The Ras-GEF domain maps to 365-591 (DEEEIARQLC…EQPQLTLDLS (227 aa)).

In terms of assembly, component of the Sca1 complex composed of at least gefA, gefH, scaA, phr, and the protein phosphatase 2A subunits pppA and pho2B. Interacts directly with gefA and phr.

The protein resides in the cell membrane. Promotes the exchange of Ras-bound GDP by GTP. Component of the Sca1 complex, a regulator of cell motility, chemotaxis and signal relay. The Sca1 complex is recruited to the plasma membrane in a chemoattractant- and F-actin-dependent manner and is enriched at the leading edge of chemotaxing cells where it regulates F-actin dynamics and signal relay by controlling the activation of rasC and the downstream target of rapamycin complex 2 (TORC2)-Akt/protein kinase B (PKB) pathway. In Dictyostelium discoideum (Social amoeba), this protein is Ras guanine nucleotide exchange factor H (gefH).